We begin with the raw amino-acid sequence, 285 residues long: uncharacterized protein (285 aa).

The segment at 1-25 (MANQKKKTLPPQHQNQQPGFEYLMD) is disordered. 45–69 (IITGGDSGIGRAVSVLFAKEGANVV) lines the NADP(+) pocket. Residue Ser177 coordinates substrate. The active-site Proton acceptor is Tyr190.

The protein belongs to the short-chain dehydrogenases/reductases (SDR) family.

This is an uncharacterized protein from Bacillus subtilis (strain 168).